Here is a 320-residue protein sequence, read N- to C-terminus: Lipoyl synthase (320 aa).

[4Fe-4S] cluster-binding residues include Cys-67, Cys-72, Cys-78, Cys-93, Cys-97, Cys-100, and Ser-307. The Radical SAM core domain maps to 79-296 (FNHGTATFMI…RDKANEMGFE (218 aa)).

The protein belongs to the radical SAM superfamily. Lipoyl synthase family. It depends on [4Fe-4S] cluster as a cofactor.

Its subcellular location is the cytoplasm. The enzyme catalyses [[Fe-S] cluster scaffold protein carrying a second [4Fe-4S](2+) cluster] + N(6)-octanoyl-L-lysyl-[protein] + 2 oxidized [2Fe-2S]-[ferredoxin] + 2 S-adenosyl-L-methionine + 4 H(+) = [[Fe-S] cluster scaffold protein] + N(6)-[(R)-dihydrolipoyl]-L-lysyl-[protein] + 4 Fe(3+) + 2 hydrogen sulfide + 2 5'-deoxyadenosine + 2 L-methionine + 2 reduced [2Fe-2S]-[ferredoxin]. Its pathway is protein modification; protein lipoylation via endogenous pathway; protein N(6)-(lipoyl)lysine from octanoyl-[acyl-carrier-protein]: step 2/2. In terms of biological role, catalyzes the radical-mediated insertion of two sulfur atoms into the C-6 and C-8 positions of the octanoyl moiety bound to the lipoyl domains of lipoate-dependent enzymes, thereby converting the octanoylated domains into lipoylated derivatives. The polypeptide is Lipoyl synthase (Haemophilus influenzae (strain PittEE)).